Consider the following 561-residue polypeptide: Solute carrier family 41 member 2 (561 aa).

The Extracellular portion of the chain corresponds to 1–150 (MTANTGEPYK…KESSIAMALQ (150 aa)). The chain crosses the membrane as a helical span at residues 151-171 (ILVPFLLAGFGTVSAGMVLDI). At 172 to 183 (VQHWDVFKNLTE) the chain is on the cytoplasmic side. The helical transmembrane segment at 184 to 204 (VFILVPALLGLKGNLEMTLAS) threads the bilayer. At 205-233 (RLSTAVNVGKMDSPIEKWNLIIGNLALKQ) the chain is on the extracellular side. The chain crosses the membrane as a helical span at residues 234–254 (VQATVVGFLAAVFAVILGWIP). Residues 255–270 (DGKYQLDHAILLCSSS) lie on the Cytoplasmic side of the membrane. Residues 271-291 (VATAFIASLLQGIIMVGVIVG) traverse the membrane as a helical segment. At 292–301 (SKKTGINPDN) the chain is on the extracellular side. Residues 302–322 (VATPIAASFGDLITLAILAWI) traverse the membrane as a helical segment. The Cytoplasmic portion of the chain corresponds to 323–333 (SQGLYNCLGSY). The helical transmembrane segment at 334–354 (AFVSPLVGVFFLAMTPIWIVI) threads the bilayer. Topologically, residues 355–364 (ASKHPATRTV) are extracellular. A helical transmembrane segment spans residues 365-385 (LHSGWEPVITAMLISSIGGLI). Over 386–394 (LDTTVSDPN) the chain is Cytoplasmic. The chain crosses the membrane as a helical span at residues 395 to 415 (LVGIVVYTPVINGIGGNLVAI). Topologically, residues 416-457 (QASRISTYLHLYSIPGELPEDAKGCYHPCRTFCGTGVNNKSA) are extracellular. Residues 458-478 (QVLLSLVIPGHLIFLYTIYLM) form a helical membrane-spanning segment. The Cytoplasmic segment spans residues 479-487 (KSGHTSLTP). A helical transmembrane segment spans residues 488–508 (IFVAVYLLAALLQVFALLWIA). The Extracellular segment spans residues 509–531 (DWMVHHIWRKGKDPDSFSIPYLT). Residues 532–552 (ALGDLLGTALLAISFHILWII) form a helical membrane-spanning segment. Residues 553–561 (GDRDGDVGD) are Cytoplasmic-facing.

This sequence belongs to the SLC41A transporter family.

Its subcellular location is the cell membrane. The catalysed reaction is Mg(2+)(in) = Mg(2+)(out). It carries out the reaction Mn(2+)(in) = Mn(2+)(out). It catalyses the reaction Co(2+)(in) = Co(2+)(out). The enzyme catalyses Ni(2+)(in) = Ni(2+)(out). The catalysed reaction is Fe(2+)(in) = Fe(2+)(out). Acts as a plasma-membrane magnesium transporter. Can also mediate the transport of other divalent metal cations in an order of Ba(2+) &gt; Ni(2+) &gt; Co(2+) &gt; Fe(2+) &gt; Mn(2+). In Xenopus laevis (African clawed frog), this protein is Solute carrier family 41 member 2 (slc41a2).